Consider the following 179-residue polypeptide: Large ribosomal subunit protein uL10 (179 aa).

This sequence belongs to the universal ribosomal protein uL10 family. In terms of assembly, part of the ribosomal stalk of the 50S ribosomal subunit. The N-terminus interacts with L11 and the large rRNA to form the base of the stalk. The C-terminus forms an elongated spine to which L12 dimers bind in a sequential fashion forming a multimeric L10(L12)X complex.

Functionally, forms part of the ribosomal stalk, playing a central role in the interaction of the ribosome with GTP-bound translation factors. In Thermotoga petrophila (strain ATCC BAA-488 / DSM 13995 / JCM 10881 / RKU-1), this protein is Large ribosomal subunit protein uL10.